A 304-amino-acid polypeptide reads, in one-letter code: Ribokinase (304 aa).

Substrate-binding positions include 12–14 (NVD), 41–45 (GKGAN), and Glu-142. ATP contacts are provided by residues Asn-186 and 222–227 (TLGKQG). K(+) is bound by residues Asp-248 and Thr-250. ATP-binding positions include 253–254 (GD) and Asn-279. Asp-254 serves as a coordination point for substrate. Asp-254 (proton acceptor) is an active-site residue. 4 residues coordinate K(+): Thr-285, Lys-288, Gly-290, and Ser-294.

The protein belongs to the carbohydrate kinase PfkB family. Ribokinase subfamily. In terms of assembly, homodimer. Mg(2+) serves as cofactor.

Its subcellular location is the cytoplasm. It carries out the reaction D-ribose + ATP = D-ribose 5-phosphate + ADP + H(+). Its pathway is carbohydrate metabolism; D-ribose degradation; D-ribose 5-phosphate from beta-D-ribopyranose: step 2/2. Its activity is regulated as follows. Activated by a monovalent cation that binds near, but not in, the active site. The most likely occupant of the site in vivo is potassium. Ion binding induces a conformational change that may alter substrate affinity. Catalyzes the phosphorylation of ribose at O-5 in a reaction requiring ATP and magnesium. The resulting D-ribose-5-phosphate can then be used either for sythesis of nucleotides, histidine, and tryptophan, or as a component of the pentose phosphate pathway. The polypeptide is Ribokinase (Staphylococcus aureus (strain COL)).